A 596-amino-acid chain; its full sequence is Elongation factor 4 (596 aa).

The tr-type G domain occupies Lys2–Asp183. GTP-binding positions include Asp14 to Thr19 and Asn130 to Asp133.

Belongs to the TRAFAC class translation factor GTPase superfamily. Classic translation factor GTPase family. LepA subfamily.

It is found in the cell inner membrane. It carries out the reaction GTP + H2O = GDP + phosphate + H(+). Functionally, required for accurate and efficient protein synthesis under certain stress conditions. May act as a fidelity factor of the translation reaction, by catalyzing a one-codon backward translocation of tRNAs on improperly translocated ribosomes. Back-translocation proceeds from a post-translocation (POST) complex to a pre-translocation (PRE) complex, thus giving elongation factor G a second chance to translocate the tRNAs correctly. Binds to ribosomes in a GTP-dependent manner. The sequence is that of Elongation factor 4 from Campylobacter curvus (strain 525.92).